The chain runs to 174 residues: Shikimate kinase (174 aa).

Residue 15-20 (GTGKST) participates in ATP binding. Ser19 serves as a coordination point for Mg(2+). The substrate site is built by Asp37, Arg61, and Gly82. Arg120 is an ATP binding site. Arg138 serves as a coordination point for substrate.

This sequence belongs to the shikimate kinase family. In terms of assembly, monomer. It depends on Mg(2+) as a cofactor.

It is found in the cytoplasm. The enzyme catalyses shikimate + ATP = 3-phosphoshikimate + ADP + H(+). The protein operates within metabolic intermediate biosynthesis; chorismate biosynthesis; chorismate from D-erythrose 4-phosphate and phosphoenolpyruvate: step 5/7. In terms of biological role, catalyzes the specific phosphorylation of the 3-hydroxyl group of shikimic acid using ATP as a cosubstrate. The chain is Shikimate kinase from Staphylococcus aureus (strain NCTC 8325 / PS 47).